We begin with the raw amino-acid sequence, 474 residues long: Mitochondrial import inner membrane translocase subunit TIM44-1 (474 aa).

Residues 1–54 constitute a mitochondrion transit peptide; that stretch reads MAIRKIIRDLLITKQPLLRQLFHQRVLRANARSEFLPAIGYTSHRRFSVFTEFS. Residues 68–88 adopt a coiled-coil conformation; that stretch reads ERTVKELKERTEEFKGVTEDL. The segment covering 132–143 has biased composition (basic and acidic residues); sequence VKESFKLGKEEN. The segment at 132-165 is disordered; sequence VKESFKLGKEENAESASSSGTRASQGEKQQSGST. Positions 145 to 165 are enriched in polar residues; sequence ESASSSGTRASQGEKQQSGST.

This sequence belongs to the Tim44 family. In terms of assembly, probable component of the PAM complex at least composed of a mitochondrial HSP70 protein, TIMM44 and TIMM14. The complex interacts with the TIMM23 component of the TIM17:23 complex. Expressed in roots, flowers, young cotyledons and leaves.

It is found in the mitochondrion inner membrane. In terms of biological role, essential component of the PAM complex, a complex required for the translocation of transit peptide-containing proteins from the inner membrane into the mitochondrial matrix in an ATP-dependent manner. Recruits mitochondrial HSP70 to drive protein translocation into the matrix using ATP as an energy source. This chain is Mitochondrial import inner membrane translocase subunit TIM44-1 (TIM44-1), found in Arabidopsis thaliana (Mouse-ear cress).